The primary structure comprises 392 residues: Phospho-N-acetylmuramoyl-pentapeptide-transferase (392 aa).

10 helical membrane passes run 24–44 (YLTF…LLAG), 76–96 (TMGG…WFDL), 100–120 (FVWV…VDDW), 137–157 (YFWQ…CISE), 193–213 (VSYP…IVGS), 225–245 (GLAI…AYVT), 262–282 (AGEL…FLWF), 289–309 (VFMG…IAII), 314–334 (IVLA…MLQV), and 369–389 (QVVV…LTTL).

This sequence belongs to the glycosyltransferase 4 family. MraY subfamily. It depends on Mg(2+) as a cofactor.

It localises to the cell inner membrane. The catalysed reaction is UDP-N-acetyl-alpha-D-muramoyl-L-alanyl-gamma-D-glutamyl-meso-2,6-diaminopimeloyl-D-alanyl-D-alanine + di-trans,octa-cis-undecaprenyl phosphate = di-trans,octa-cis-undecaprenyl diphospho-N-acetyl-alpha-D-muramoyl-L-alanyl-D-glutamyl-meso-2,6-diaminopimeloyl-D-alanyl-D-alanine + UMP. It participates in cell wall biogenesis; peptidoglycan biosynthesis. In terms of biological role, catalyzes the initial step of the lipid cycle reactions in the biosynthesis of the cell wall peptidoglycan: transfers peptidoglycan precursor phospho-MurNAc-pentapeptide from UDP-MurNAc-pentapeptide onto the lipid carrier undecaprenyl phosphate, yielding undecaprenyl-pyrophosphoryl-MurNAc-pentapeptide, known as lipid I. The chain is Phospho-N-acetylmuramoyl-pentapeptide-transferase from Paracidovorax citrulli (strain AAC00-1) (Acidovorax citrulli).